The chain runs to 58 residues: Preprotein translocase subunit SecG (58 aa).

Topologically, residues 1–33 (MARRKKYEGLNPFVAAGLIKFSEEGEMERIKLS) are cytoplasmic. The chain crosses the membrane as a helical span at residues 34–55 (PKAAIAVSAAIIAALIIINLLL). Topologically, residues 56-58 (PPL) are extracellular.

It belongs to the SEC61-beta family. Component of the protein translocase complex. Heterotrimer consisting of alpha (SecY), beta (SecG) and gamma (SecE) subunits. Can form oligomers of the heterotrimer.

It localises to the cell membrane. Its function is as follows. Involved in protein export. The function of the beta subunit is unknown, but it may be involved in stabilization of the trimeric complex. The polypeptide is Preprotein translocase subunit SecG (Pyrobaculum arsenaticum (strain DSM 13514 / JCM 11321 / PZ6)).